A 94-amino-acid chain; its full sequence is Co-chaperonin GroES (94 aa).

This sequence belongs to the GroES chaperonin family. In terms of assembly, heptamer of 7 subunits arranged in a ring. Interacts with the chaperonin GroEL.

It localises to the cytoplasm. In terms of biological role, together with the chaperonin GroEL, plays an essential role in assisting protein folding. The GroEL-GroES system forms a nano-cage that allows encapsulation of the non-native substrate proteins and provides a physical environment optimized to promote and accelerate protein folding. GroES binds to the apical surface of the GroEL ring, thereby capping the opening of the GroEL channel. This chain is Co-chaperonin GroES, found in Streptococcus pneumoniae (strain Hungary19A-6).